A 406-amino-acid polypeptide reads, in one-letter code: Tyrosine--tRNA ligase (406 aa).

The 'HIGH' region signature appears at P51–H60. The 'KMSKS' region signature appears at K236–S240. Residue K239 participates in ATP binding. The S4 RNA-binding domain maps to I345–V405.

This sequence belongs to the class-I aminoacyl-tRNA synthetase family. TyrS type 2 subfamily. As to quaternary structure, homodimer.

The protein localises to the cytoplasm. It catalyses the reaction tRNA(Tyr) + L-tyrosine + ATP = L-tyrosyl-tRNA(Tyr) + AMP + diphosphate + H(+). Its function is as follows. Catalyzes the attachment of tyrosine to tRNA(Tyr) in a two-step reaction: tyrosine is first activated by ATP to form Tyr-AMP and then transferred to the acceptor end of tRNA(Tyr). The protein is Tyrosine--tRNA ligase of Wolinella succinogenes (strain ATCC 29543 / DSM 1740 / CCUG 13145 / JCM 31913 / LMG 7466 / NCTC 11488 / FDC 602W) (Vibrio succinogenes).